A 100-amino-acid polypeptide reads, in one-letter code: Guanine nucleotide-binding protein subunit gamma 2 (100 aa).

Residue Met-1 is modified to N-acetylmethionine. A coiled-coil region spans residues 19 to 55; it reads TRGKHRIQAELKRLEQEARFLEEELEQLEKMDNASAS. The 80-residue stretch at 21–100 folds into the G protein gamma domain; that stretch reads GKHRIQAELK…EAKRCGCSIL (80 aa). The regulates lipidation and cell membrane subcellular localization stretch occupies residues 90–96; it reads KEAKRCG. A lipid anchor (S-palmitoyl cysteine) is attached at Cys-95. Cysteine methyl ester is present on Cys-97. Residue Cys-97 is the site of S-farnesyl cysteine attachment. Residues 98 to 100 constitute a propeptide, removed in mature form; the sequence is SIL.

As to quaternary structure, g proteins are composed of 3 units, alpha, beta and gamma. GPG1 interacts with the beta subunit GB1. The dimer GB1-GG2 interacts with NDL1, NDL2 and NDL3. Binds to NUDT7. Mostly expressed in roots (excluded from the stele), seedlings (especially at the hypocotyl/root junction), floral stems, floral buds, flowers and siliques, and, to a lower extent, in leaves (restricted to guard cells). Also present in hydathods.

It localises to the cell membrane. Guanine nucleotide-binding proteins (G proteins) are involved as a modulator or transducer in various transmembrane signaling systems. The beta and gamma chains are required for the GTPase activity, for replacement of GDP by GTP, and for G protein-effector interaction. Involved in the abscisic acid (ABA) and ethylene signaling pathways. Regulates basipetal transport of auxin (IAA) in roots and hypocotyls, and thus modulates root architecture (e.g. lateral root formation). The heterotrimeric G-protein controls defense responses to necrotrophic and vascular fungi probably by modulating cell wall-related genes expression; involved in resistance to Plectosphaerella cucumerina. This Arabidopsis thaliana (Mouse-ear cress) protein is Guanine nucleotide-binding protein subunit gamma 2 (GG2).